A 112-amino-acid polypeptide reads, in one-letter code: 2Fe-2S ferredoxin (112 aa).

One can recognise a 2Fe-2S ferredoxin-type domain in the interval 1 to 104 (MPQIVILPHA…DLVVEIPKYT (104 aa)). Residues C42, C48, C51, and C87 each contribute to the [2Fe-2S] cluster site.

It belongs to the adrenodoxin/putidaredoxin family. [2Fe-2S] cluster serves as cofactor.

Functionally, ferredoxin are iron-sulfur proteins that transfer electrons in a wide variety of metabolic reactions. The polypeptide is 2Fe-2S ferredoxin (fdx) (Pseudomonas aeruginosa (strain ATCC 15692 / DSM 22644 / CIP 104116 / JCM 14847 / LMG 12228 / 1C / PRS 101 / PAO1)).